The sequence spans 1132 residues: Sentrin-specific protease 6 (1132 aa).

2 disordered regions span residues 23–51 (SKRD…DGAN) and 327–388 (LPGG…VPST). 5 positions are modified to phosphoserine: Ser41, Ser355, Ser356, Ser371, and Ser373. Residue Thr436 is modified to Phosphothreonine. Lys648 participates in a covalent cross-link: Glycyl lysine isopeptide (Lys-Gly) (interchain with G-Cter in SUMO2). The segment at 686 to 1132 (ISVTNEDLHC…QYASASGGSE (447 aa)) is protease. Active-site residues include His785 and Asp936. Residue Ser938 is modified to Phosphoserine. Cys1049 is an active-site residue. Ser1131 carries the post-translational modification Phosphoserine.

The protein belongs to the peptidase C48 family. As to quaternary structure, interacts with RXRA. Forms a complex with KAT5-TIP60 and UBE2I in response to UV irradiation. Interacts with RPA1 to maintain it in hyposumoylated state during S phase preventing DNA repair initiation.

Its subcellular location is the nucleus. Its pathway is protein modification; protein sumoylation. In terms of biological role, protease that deconjugates SUMO1, SUMO2 and SUMO3 from targeted proteins. Processes preferentially poly-SUMO2 and poly-SUMO3 chains, but does not efficiently process SUMO1, SUMO2 and SUMO3 precursors. Deconjugates SUMO1 from RXRA, leading to transcriptional activation. Involved in chromosome alignment and spindle assembly, by regulating the kinetochore CENPH-CENPI-CENPK complex. Desumoylates PML and CENPI, protecting them from degradation by the ubiquitin ligase RNF4, which targets polysumoylated proteins for proteasomal degradation. Also desumoylates RPA1, thus preventing recruitment of RAD51 to the DNA damage foci to initiate DNA repair through homologous recombination. The protein is Sentrin-specific protease 6 (Senp6) of Mus musculus (Mouse).